The sequence spans 611 residues: Urease subunit alpha 2 (611 aa).

The 458-residue stretch at 154 to 611 (GGIDSHIHFI…LPMAQRYFLF (458 aa)) folds into the Urease domain. Ni(2+) contacts are provided by His-159, His-161, and Lys-242. Lys-242 carries the post-translational modification N6-carboxylysine. His-244 is a binding site for substrate. His-271 and His-297 together coordinate Ni(2+). His-345 functions as the Proton donor in the catalytic mechanism. A Ni(2+)-binding site is contributed by Asp-385. The segment at 411 to 434 (GHLAPDQSAKTEQSLDNIMLSPTD) is disordered. The segment covering 418–434 (SAKTEQSLDNIMLSPTD) has biased composition (polar residues).

Belongs to the metallo-dependent hydrolases superfamily. Urease alpha subunit family. Heterotrimer of UreA (gamma), UreB (beta) and UreC (alpha) subunits. Three heterotrimers associate to form the active enzyme. Ni cation is required as a cofactor. Post-translationally, carboxylation allows a single lysine to coordinate two nickel ions.

The protein localises to the cytoplasm. It catalyses the reaction urea + 2 H2O + H(+) = hydrogencarbonate + 2 NH4(+). The protein operates within nitrogen metabolism; urea degradation; CO(2) and NH(3) from urea (urease route): step 1/1. The chain is Urease subunit alpha 2 from Psychrobacter cryohalolentis (strain ATCC BAA-1226 / DSM 17306 / VKM B-2378 / K5).